Consider the following 485-residue polypeptide: Glutamyl-tRNA(Gln) amidotransferase subunit A (485 aa).

Residues Lys-78 and Ser-153 each act as charge relay system in the active site. The Acyl-ester intermediate role is filled by Ser-177.

It belongs to the amidase family. GatA subfamily. Heterotrimer of A, B and C subunits.

It catalyses the reaction L-glutamyl-tRNA(Gln) + L-glutamine + ATP + H2O = L-glutaminyl-tRNA(Gln) + L-glutamate + ADP + phosphate + H(+). In terms of biological role, allows the formation of correctly charged Gln-tRNA(Gln) through the transamidation of misacylated Glu-tRNA(Gln) in organisms which lack glutaminyl-tRNA synthetase. The reaction takes place in the presence of glutamine and ATP through an activated gamma-phospho-Glu-tRNA(Gln). In Bacillus cereus (strain 03BB102), this protein is Glutamyl-tRNA(Gln) amidotransferase subunit A.